Consider the following 397-residue polypeptide: Lysophospholipid transporter LplT (397 aa).

Residues 1 to 17 lie on the Periplasmic side of the membrane; that stretch reads MSESVHTNTSLWSKGMK. A helical membrane pass occupies residues 18–38; that stretch reads AVIVAQFLSAFGDNALLFATL. Topologically, residues 39-52 are cytoplasmic; the sequence is ALLKAQFYPEWSQP. A helical transmembrane segment spans residues 53–73; the sequence is ILQMVFVGAYILFAPFVGQVA. The Periplasmic segment spans residues 74 to 90; sequence DSFAKGRVMMFANGLKL. A helical membrane pass occupies residues 91–111; sequence LGAASICFGINPFLGYTLVGV. The Cytoplasmic portion of the chain corresponds to 112 to 144; the sequence is GAAAYSPAKYGILGELTTGSKLVKANGLMEAST. Residues 145–165 form a helical membrane-spanning segment; that stretch reads IAAILLGSVAGGVLADWHVLV. Residue A166 is a topological domain, periplasmic. A helical transmembrane segment spans residues 167–187; it reads LAACALAYGGAVVANIYIPKL. At 188 to 226 the chain is on the cytoplasmic side; sequence AAARPGQSWNLINMTRSFLNACTSLWRNGETRFSLVGTS. Residues 227 to 247 form a helical membrane-spanning segment; sequence LFWGAGVTLRFLLVLWVPVAL. At 248 to 256 the chain is on the periplasmic side; that stretch reads GITDNSTPT. Residues 257 to 277 traverse the membrane as a helical segment; the sequence is YLNAMVAIGIVVGAGAAAKLV. The Cytoplasmic portion of the chain corresponds to 278–280; sequence TLE. The helical transmembrane segment at 281-301 threads the bilayer; it reads TVSRCMPAGILIGVVVLIFSL. Over 302–304 the chain is Periplasmic; the sequence is QHE. Residues 305 to 325 traverse the membrane as a helical segment; the sequence is LLPAYALLMLIGVMGGFFVVP. The Cytoplasmic segment spans residues 326 to 343; it reads LNALLQERGKKSVGAGNA. Residues 344 to 364 traverse the membrane as a helical segment; the sequence is IAVQNLGENSAMLLMLGIYSL. Residues 365-366 are Periplasmic-facing; that stretch reads AV. Residues 367-387 traverse the membrane as a helical segment; that stretch reads MVGIPVVPIGIGFGALFALAI. Topologically, residues 388–397 are cytoplasmic; the sequence is TALWIWQRRH.

Belongs to the major facilitator superfamily. LplT (TC 2.A.1.42) family.

The protein localises to the cell inner membrane. Functionally, catalyzes the facilitated diffusion of 2-acyl-glycero-3-phosphoethanolamine (2-acyl-GPE) into the cell. In Shigella boydii serotype 4 (strain Sb227), this protein is Lysophospholipid transporter LplT.